Consider the following 798-residue polypeptide: Nuclear intron maturase 4, mitochondrial (798 aa).

The transit peptide at 1 to 16 (MFRKRNLVLDLLRRCY) directs the protein to the mitochondrion. The intron maturase type-2 stretch occupies residues 578–665 (VVAPTNAIGR…AAKYRIHENE (88 aa)). A THAP-type zinc finger spans residues 729-778 (CFVIGCSMAAPAVYTLHAMERQKFPGWKTGFSVCIPSSLNGRRIGLCKQH).

The protein belongs to the plant nuclear intron maturase (nMat) family.

The protein resides in the mitochondrion. The protein localises to the plastid. It is found in the chloroplast. Nuclear-encoded maturase required for splicing of group-II introns in mitochondria. Involved in NAD1 pre-mRNA processing and maturation of introns 1, 3 and 4. Necessary for mitochondrial biogenesis during early developmental stages. Essential for respiratory holocomplex I biogenesis in mitochondria. The polypeptide is Nuclear intron maturase 4, mitochondrial (Arabidopsis thaliana (Mouse-ear cress)).